Consider the following 147-residue polypeptide: D-aminoacyl-tRNA deacylase (147 aa).

The Gly-cisPro motif, important for rejection of L-amino acids motif lies at 138–139; that stretch reads GP.

Belongs to the DTD family. Homodimer.

Its subcellular location is the cytoplasm. The enzyme catalyses glycyl-tRNA(Ala) + H2O = tRNA(Ala) + glycine + H(+). It carries out the reaction a D-aminoacyl-tRNA + H2O = a tRNA + a D-alpha-amino acid + H(+). Functionally, an aminoacyl-tRNA editing enzyme that deacylates mischarged D-aminoacyl-tRNAs. Also deacylates mischarged glycyl-tRNA(Ala), protecting cells against glycine mischarging by AlaRS. Acts via tRNA-based rather than protein-based catalysis; rejects L-amino acids rather than detecting D-amino acids in the active site. By recycling D-aminoacyl-tRNA to D-amino acids and free tRNA molecules, this enzyme counteracts the toxicity associated with the formation of D-aminoacyl-tRNA entities in vivo and helps enforce protein L-homochirality. The protein is D-aminoacyl-tRNA deacylase of Prosthecochloris aestuarii (strain DSM 271 / SK 413).